A 29-amino-acid polypeptide reads, in one-letter code: Cytochrome b6-f complex subunit 8 (29 aa).

Residues 3–23 traverse the membrane as a helical segment; the sequence is IISLAWAALMVVFTFSLSLVV.

Belongs to the PetN family. In terms of assembly, the 4 large subunits of the cytochrome b6-f complex are cytochrome b6, subunit IV (17 kDa polypeptide, PetD), cytochrome f and the Rieske protein, while the 4 small subunits are PetG, PetL, PetM and PetN. The complex functions as a dimer.

It is found in the plastid. The protein resides in the chloroplast thylakoid membrane. Component of the cytochrome b6-f complex, which mediates electron transfer between photosystem II (PSII) and photosystem I (PSI), cyclic electron flow around PSI, and state transitions. The polypeptide is Cytochrome b6-f complex subunit 8 (Nicotiana tomentosiformis (Tobacco)).